Consider the following 646-residue polypeptide: Tyrosine-protein kinase MasK (646 aa).

Residues 1-415 (MSPPQTTLPV…PTAGGRRWRT (415 aa)) are Periplasmic-facing. In terms of domain architecture, Protein kinase spans 25–300 (YVLVRKLAEG…AFADALETFL (276 aa)). ATP-binding positions include 31–39 (LAEGGMAEI) and Lys57. Asp163 (proton acceptor) is an active-site residue. The interval 373 to 410 (TSAQRPGMSMRPSSPGVPAHGAASRGSTSPESAPTAGG) is disordered. A helical transmembrane segment spans residues 416-433 (LAVGLAGGLMLAAAGIVG). The Cytoplasmic segment spans residues 434 to 646 (YRQWMTTPAS…VMPFSWRVTQ (213 aa)). The interval 521 to 547 (AGAASDVEAEADEEGADAAPVRSKKAS) is disordered. Residues 527–536 (VEAEADEEGA) show a composition bias toward acidic residues.

The protein belongs to the protein kinase superfamily. Tyr protein kinase family. Interacts with MglA. In terms of processing, autophosphorylated.

The protein resides in the cell inner membrane. The enzyme catalyses L-tyrosyl-[protein] + ATP = O-phospho-L-tyrosyl-[protein] + ADP + H(+). Its function is as follows. Essential for growth. Interacts with MglA to control social gliding motility. This is Tyrosine-protein kinase MasK (masK) from Myxococcus xanthus (strain DK1622).